A 258-amino-acid chain; its full sequence is Kallikrein-1 (258 aa).

The N-terminal stretch at 1 to 18 is a signal peptide; it reads MWFLVLCLALSLGGTGAA. The propeptide at 19 to 24 is activation peptide; that stretch reads PPIQSR. The 231-residue stretch at 25–255 folds into the Peptidase S1 domain; sequence IVGGWECSQP…YVKWIEDTIA (231 aa). 5 disulfides stabilise this stretch: Cys-31/Cys-170, Cys-47/Cys-63, Cys-149/Cys-216, Cys-181/Cys-195, and Cys-206/Cys-231. The Charge relay system role is filled by His-62. Ser-90 is a glycosylation site (O-linked (GalNAc...) serine). N-linked (GlcNAc...) asparagine glycosylation is present at Asn-99. A glycan (O-linked (GalNAc...) serine) is linked at Ser-101. N-linked (GlcNAc...) asparagine glycosylation occurs at Asn-105. Catalysis depends on Asp-117, which acts as the Charge relay system. An N-linked (GlcNAc...) asparagine glycan is attached at Asn-161. An O-linked (GalNAc...) serine glycan is attached at Ser-163. Catalysis depends on Ser-210, which acts as the Charge relay system.

The protein belongs to the peptidase S1 family. Kallikrein subfamily.

It catalyses the reaction Preferential cleavage of Arg-|-Xaa bonds in small molecule substrates. Highly selective action to release kallidin (lysyl-bradykinin) from kininogen involves hydrolysis of Met-|-Xaa or Leu-|-Xaa.. Its function is as follows. Glandular kallikreins cleave Met-Lys and Arg-Ser bonds in kininogen to release Lys-bradykinin. This is Kallikrein-1 (KLK1) from Papio hamadryas (Hamadryas baboon).